The following is a 360-amino-acid chain: Melanoma-associated antigen B16 (360 aa).

A disordered region spans residues 1–118; it reads MSQKNPEYAA…GNSVIPPDQP (118 aa). The span at 9 to 19 shows a compositional bias: basic and acidic residues; the sequence is AADHDHTREEM. The span at 63 to 98 shows a compositional bias: polar residues; that stretch reads CSSSQLLTASNQEDPAYETPSTSRGLQHPYVSSSES. Residues 125–324 form the MAGE domain; it reads IDGKVNFLVN…TVFPSQYEEA (200 aa). A disordered region spans residues 340–360; the sequence is AGPSSASGESSSDMGSNVPHI. Over residues 341–360 the composition is skewed to low complexity; the sequence is GPSSASGESSSDMGSNVPHI.

This chain is Melanoma-associated antigen B16 (Mageb16), found in Rattus norvegicus (Rat).